We begin with the raw amino-acid sequence, 279 residues long: Tryptophan synthase alpha chain (279 aa).

Active-site proton acceptor residues include E50 and D61.

It belongs to the TrpA family. Tetramer of two alpha and two beta chains.

It catalyses the reaction (1S,2R)-1-C-(indol-3-yl)glycerol 3-phosphate + L-serine = D-glyceraldehyde 3-phosphate + L-tryptophan + H2O. It functions in the pathway amino-acid biosynthesis; L-tryptophan biosynthesis; L-tryptophan from chorismate: step 5/5. Functionally, the alpha subunit is responsible for the aldol cleavage of indoleglycerol phosphate to indole and glyceraldehyde 3-phosphate. This chain is Tryptophan synthase alpha chain, found in Brucella melitensis biotype 1 (strain ATCC 23456 / CCUG 17765 / NCTC 10094 / 16M).